The primary structure comprises 82 residues: Translational regulator CsrA (82 aa).

The protein belongs to the CsrA/RsmA family. As to quaternary structure, homodimer; the beta-strands of each monomer intercalate to form a hydrophobic core, while the alpha-helices form wings that extend away from the core.

The protein resides in the cytoplasm. In terms of biological role, a translational regulator that binds mRNA to regulate translation initiation and/or mRNA stability. Usually binds in the 5'-UTR at or near the Shine-Dalgarno sequence preventing ribosome-binding, thus repressing translation. Its main target seems to be the major flagellin gene, while its function is anatagonized by FliW. The polypeptide is Translational regulator CsrA (Brachyspira hyodysenteriae (strain ATCC 49526 / WA1)).